Consider the following 272-residue polypeptide: Putative pyruvate, phosphate dikinase regulatory protein (272 aa).

An ADP-binding site is contributed by 153 to 160 (GVSRTSKT).

It belongs to the pyruvate, phosphate/water dikinase regulatory protein family. PDRP subfamily.

The catalysed reaction is N(tele)-phospho-L-histidyl/L-threonyl-[pyruvate, phosphate dikinase] + ADP = N(tele)-phospho-L-histidyl/O-phospho-L-threonyl-[pyruvate, phosphate dikinase] + AMP + H(+). It catalyses the reaction N(tele)-phospho-L-histidyl/O-phospho-L-threonyl-[pyruvate, phosphate dikinase] + phosphate + H(+) = N(tele)-phospho-L-histidyl/L-threonyl-[pyruvate, phosphate dikinase] + diphosphate. Its function is as follows. Bifunctional serine/threonine kinase and phosphorylase involved in the regulation of the pyruvate, phosphate dikinase (PPDK) by catalyzing its phosphorylation/dephosphorylation. The chain is Putative pyruvate, phosphate dikinase regulatory protein from Streptococcus sanguinis (strain SK36).